The chain runs to 147 residues: Sec-independent protein translocase protein TatB (147 aa).

A helical membrane pass occupies residues 1–21 (MFDIGFWELVVIGVVALVVLG). Residues 114 to 147 (EPVAPISVATPDEEPTVIPAARAQPSAEQGEVKP) are disordered.

The protein belongs to the TatB family. In terms of assembly, the Tat system comprises two distinct complexes: a TatABC complex, containing multiple copies of TatA, TatB and TatC subunits, and a separate TatA complex, containing only TatA subunits. Substrates initially bind to the TatABC complex, which probably triggers association of the separate TatA complex to form the active translocon.

Its subcellular location is the cell inner membrane. Part of the twin-arginine translocation (Tat) system that transports large folded proteins containing a characteristic twin-arginine motif in their signal peptide across membranes. Together with TatC, TatB is part of a receptor directly interacting with Tat signal peptides. TatB may form an oligomeric binding site that transiently accommodates folded Tat precursor proteins before their translocation. This Aeromonas hydrophila subsp. hydrophila (strain ATCC 7966 / DSM 30187 / BCRC 13018 / CCUG 14551 / JCM 1027 / KCTC 2358 / NCIMB 9240 / NCTC 8049) protein is Sec-independent protein translocase protein TatB.